Consider the following 126-residue polypeptide: Small ribosomal subunit protein uS13c (126 aa).

The interval 97–126 (PLRGQRTRTNARTRRGGKKTVAGKKKAPRK) is disordered. Residues 101-126 (QRTRTNARTRRGGKKTVAGKKKAPRK) are compositionally biased toward basic residues.

This sequence belongs to the universal ribosomal protein uS13 family. In terms of assembly, part of the 30S ribosomal subunit.

The protein localises to the plastid. Its subcellular location is the chloroplast. In terms of biological role, located at the top of the head of the 30S subunit, it contacts several helices of the 16S rRNA. The protein is Small ribosomal subunit protein uS13c of Pyropia yezoensis (Susabi-nori).